Here is a 309-residue protein sequence, read N- to C-terminus: Probable 2,4-dienoyl-CoA reductase 3 [(3E)-enoyl-CoA-producing] (309 aa).

NADP(+)-binding positions include 32-37, R57, and D83; that span reads GGGTGI. R57 is a substrate binding site. 2 residues coordinate substrate: F116 and S124. Y166 serves as the catalytic Proton acceptor. Residues K181 and 207-210 contribute to the NADP(+) site; that span reads PGPI. R218 provides a ligand contact to substrate.

This sequence belongs to the short-chain dehydrogenases/reductases (SDR) family. 2,4-dienoyl-CoA reductase subfamily.

It carries out the reaction a (2E,4E)-dienoyl-CoA + NADPH + H(+) = a 4,5-saturated-(3E)-enoyl-CoA + NADP(+). It catalyses the reaction a (2E,4Z)-dienoyl-CoA + NADPH + H(+) = a 4,5-saturated-(3E)-enoyl-CoA + NADP(+). In terms of biological role, auxiliary enzyme of beta-oxidation. It participates in the metabolism of unsaturated fatty enoyl-CoA esters having double bonds in both even- and odd-numbered positions. Catalyzes the NADP-dependent reduction of 2,4-dienoyl-CoA to yield trans-3-enoyl-CoA. The chain is Probable 2,4-dienoyl-CoA reductase 3 [(3E)-enoyl-CoA-producing] from Caenorhabditis elegans.